The chain runs to 340 residues: Protein HP_1247 (340 aa).

Seems to interact with H.pylori HolB.

Functionally, could be the functional equivalent of DNA polymerase III delta subunit (HolA). This chain is Protein HP_1247, found in Helicobacter pylori (strain ATCC 700392 / 26695) (Campylobacter pylori).